Consider the following 180-residue polypeptide: Ribulose bisphosphate carboxylase small subunit, chloroplastic 3 (180 aa).

A chloroplast-targeting transit peptide spans 1–56; it reads MASSVMSSAAVATRGNGAQASMVAPFTGLKSTASFPVSRKQNLDITSIASNGGRVS.

The protein belongs to the RuBisCO small chain family. As to quaternary structure, heterohexadecamer of 8 large and 8 small subunits. (Microbial infection) Binds to tobamovirus movement protein; this interaction seems required for viral systemic movement.

Its subcellular location is the plastid. It localises to the chloroplast. The protein localises to the cell junction. The protein resides in the plasmodesma. Functionally, ruBisCO catalyzes two reactions: the carboxylation of D-ribulose 1,5-bisphosphate, the primary event in carbon dioxide fixation, as well as the oxidative fragmentation of the pentose substrate. Both reactions occur simultaneously and in competition at the same active site. Although the small subunit is not catalytic it is essential for maximal activity. Involved in antiviral defenses. The chain is Ribulose bisphosphate carboxylase small subunit, chloroplastic 3 from Solanum lycopersicum (Tomato).